Reading from the N-terminus, the 296-residue chain is 4-hydroxybenzoate octaprenyltransferase (296 aa).

Transmembrane regions (helical) follow at residues 28–48 (PIGI…AGNG), 52–72 (LANV…GCCI), 102–122 (ALTL…CTNS), 145–167 (TYYP…FTAA), 174–196 (GAWL…YAMV), 219–239 (SIIL…GSRF), 241–261 (LGGW…WEYW), and 275–295 (FLHN…DYAL).

It belongs to the UbiA prenyltransferase family. Mg(2+) serves as cofactor.

The protein localises to the cell inner membrane. The catalysed reaction is all-trans-octaprenyl diphosphate + 4-hydroxybenzoate = 4-hydroxy-3-(all-trans-octaprenyl)benzoate + diphosphate. It participates in cofactor biosynthesis; ubiquinone biosynthesis. In terms of biological role, catalyzes the prenylation of para-hydroxybenzoate (PHB) with an all-trans polyprenyl group. Mediates the second step in the final reaction sequence of ubiquinone-8 (UQ-8) biosynthesis, which is the condensation of the polyisoprenoid side chain with PHB, generating the first membrane-bound Q intermediate 3-octaprenyl-4-hydroxybenzoate. This Pseudomonas putida (strain ATCC 700007 / DSM 6899 / JCM 31910 / BCRC 17059 / LMG 24140 / F1) protein is 4-hydroxybenzoate octaprenyltransferase.